Here is a 291-residue protein sequence, read N- to C-terminus: Proline iminopeptidase (291 aa).

The region spanning 30 to 274 (LLIHGGPGSS…ANSRHLALLD (245 aa)) is the AB hydrolase-1 domain. S103 serves as the catalytic Nucleophile. Residue D242 is part of the active site. H269 (proton donor) is an active-site residue.

This sequence belongs to the peptidase S33 family.

It is found in the cell envelope. The enzyme catalyses Release of N-terminal proline from a peptide.. In terms of biological role, releases the N-terminal proline from various substrates. This chain is Proline iminopeptidase, found in Lacticaseibacillus rhamnosus (strain Lc 705) (Lactobacillus rhamnosus).